A 91-amino-acid chain; its full sequence is Alpha-latrotoxin associated low molecular weight protein SGV150-311 (91 aa).

Residues 1–18 (MNVLHFLILLMSVVSVFC) form the signal peptide.

Belongs to the arthropod CHH/MIH/GIH/VIH hormone family. As to expression, expressed by the venom gland.

The protein localises to the secreted. Functionally, may increase the toxicity of alpha-latrotoxin and/or other venom components. Is non-toxic to mice and to the cockroach Periplaneta americana. The sequence is that of Alpha-latrotoxin associated low molecular weight protein SGV150-311 from Steatoda grossa (False black widow).